The following is a 160-amino-acid chain: Deoxyuridine 5'-triphosphate nucleotidohydrolase (160 aa).

Substrate contacts are provided by residues 79-81 (RSG), N92, 96-98 (TVD), and K106.

The protein belongs to the dUTPase family. It depends on Mg(2+) as a cofactor.

It carries out the reaction dUTP + H2O = dUMP + diphosphate + H(+). Its pathway is pyrimidine metabolism; dUMP biosynthesis; dUMP from dCTP (dUTP route): step 2/2. In terms of biological role, this enzyme is involved in nucleotide metabolism: it produces dUMP, the immediate precursor of thymidine nucleotides and it decreases the intracellular concentration of dUTP so that uracil cannot be incorporated into DNA. This chain is Deoxyuridine 5'-triphosphate nucleotidohydrolase, found in Sinorhizobium medicae (strain WSM419) (Ensifer medicae).